The sequence spans 265 residues: Undecaprenyl-diphosphatase (265 aa).

Transmembrane regions (helical) follow at residues 7-27 (IIVS…PISS), 45-65 (TKIL…YFFH), 86-106 (LHII…YKKI), 108-128 (LLFN…FLLI), 145-165 (ISLL…YPGF), 186-206 (IEFS…YDFI), 214-234 (ILDL…SILC), and 245-265 (TSLI…YFIN).

It belongs to the UppP family.

The protein resides in the cell membrane. The enzyme catalyses di-trans,octa-cis-undecaprenyl diphosphate + H2O = di-trans,octa-cis-undecaprenyl phosphate + phosphate + H(+). In terms of biological role, catalyzes the dephosphorylation of undecaprenyl diphosphate (UPP). Confers resistance to bacitracin. The sequence is that of Undecaprenyl-diphosphatase from Buchnera aphidicola subsp. Acyrthosiphon pisum (strain Tuc7).